Here is a 479-residue protein sequence, read N- to C-terminus: Glycogen synthase (479 aa).

Residue Lys15 participates in ADP-alpha-D-glucose binding.

It belongs to the glycosyltransferase 1 family. Bacterial/plant glycogen synthase subfamily.

The catalysed reaction is [(1-&gt;4)-alpha-D-glucosyl](n) + ADP-alpha-D-glucose = [(1-&gt;4)-alpha-D-glucosyl](n+1) + ADP + H(+). It functions in the pathway glycan biosynthesis; glycogen biosynthesis. Synthesizes alpha-1,4-glucan chains using ADP-glucose. The polypeptide is Glycogen synthase (Clostridium novyi (strain NT)).